We begin with the raw amino-acid sequence, 206 residues long: MTTTAFAFVLAAYLIGSLSFAVIVSKAMGMADPRSYGSGNPGATNVLRTGKKLAAALTLLGDGAKGWVAVALASWLGPRYGLGEQGIALCALAVLFGHMWPVFFGFKGGKGVATAVGILFGINPWLALAALATWLFMAFVVKISSLSAIVACVLAPVYAFFILGPHSVYFGTCIIIAIVVVHRHKSNLIKLMTGQEDKIGNKGDAG.

The next 6 helical transmembrane spans lie at T4–V24, L53–A73, G86–F106, V116–F136, M137–V157, and F160–V180.

Belongs to the PlsY family. In terms of assembly, probably interacts with PlsX.

The protein resides in the cell inner membrane. The catalysed reaction is an acyl phosphate + sn-glycerol 3-phosphate = a 1-acyl-sn-glycero-3-phosphate + phosphate. It functions in the pathway lipid metabolism; phospholipid metabolism. In terms of biological role, catalyzes the transfer of an acyl group from acyl-phosphate (acyl-PO(4)) to glycerol-3-phosphate (G3P) to form lysophosphatidic acid (LPA). This enzyme utilizes acyl-phosphate as fatty acyl donor, but not acyl-CoA or acyl-ACP. The sequence is that of Glycerol-3-phosphate acyltransferase from Chromobacterium violaceum (strain ATCC 12472 / DSM 30191 / JCM 1249 / CCUG 213 / NBRC 12614 / NCIMB 9131 / NCTC 9757 / MK).